Consider the following 445-residue polypeptide: uncharacterized protein (445 aa).

8 consecutive transmembrane segments (helical) span residues 16-36 (IVSLGVTASSFLFINGVAFLI), 52-72 (LLASMPSWGLVVTMFAWGYLL), 98-118 (VHSLLWIGVFLFLGGMAAGGC), 168-188 (GLMFPAVVCTLAAVASVLGIV), 219-239 (ASALLMMPQTVTVTFMLVWLI), 243-263 (GWSVAQAGVLVTISQLLGALG), 283-303 (LIAAAAAATLFLLAAVDNEGS), and 366-386 (AAYPTAWALCGVFPLAAVPLV). Residues 417 to 445 (AWPNGPRRPGPPGQPRRVRQGGTAITPPT) form a disordered region.

It belongs to the major facilitator superfamily.

It localises to the cell membrane. This is an uncharacterized protein from Mycobacterium tuberculosis (strain ATCC 25618 / H37Rv).